A 237-amino-acid polypeptide reads, in one-letter code: Aspartate/glutamate leucyltransferase (237 aa).

It belongs to the R-transferase family. Bpt subfamily.

Its subcellular location is the cytoplasm. The catalysed reaction is N-terminal L-glutamyl-[protein] + L-leucyl-tRNA(Leu) = N-terminal L-leucyl-L-glutamyl-[protein] + tRNA(Leu) + H(+). The enzyme catalyses N-terminal L-aspartyl-[protein] + L-leucyl-tRNA(Leu) = N-terminal L-leucyl-L-aspartyl-[protein] + tRNA(Leu) + H(+). In terms of biological role, functions in the N-end rule pathway of protein degradation where it conjugates Leu from its aminoacyl-tRNA to the N-termini of proteins containing an N-terminal aspartate or glutamate. In Shewanella amazonensis (strain ATCC BAA-1098 / SB2B), this protein is Aspartate/glutamate leucyltransferase.